Here is a 119-residue protein sequence, read N- to C-terminus: MAGGKEPIEVKFRLFDGTDIGPSKYDPSTTVSALKEFILARWPQDKEITPKTVNDLKLINAGRILENNRTLAESRVPVGEVPGGVITMHVVVRPPQPDKNSEKQLANSPKQNRCGCTIL.

In terms of domain architecture, Ubiquitin-like spans 8–76 (IEVKFRLFDG…NNRTLAESRV (69 aa)). The residue at position 116 (C116) is a Cysteine methyl ester. A lipid anchor (S-geranylgeranyl cysteine) is attached at C116. The propeptide at 117–119 (TIL) is removed in mature form.

It is found in the cell membrane. In terms of biological role, may serve as docking site to facilitate the association of other proteins to the plasma membrane. In Oryza sativa subsp. japonica (Rice), this protein is Membrane-anchored ubiquitin-fold protein 3 (MUB3).